The chain runs to 208 residues: Small ribosomal subunit protein uS4 (208 aa).

The 65-residue stretch at 95–159 (TIIDNIVYRA…LKKLIGSNIE (65 aa)) folds into the S4 RNA-binding domain.

This sequence belongs to the universal ribosomal protein uS4 family. Part of the 30S ribosomal subunit. Contacts protein S5. The interaction surface between S4 and S5 is involved in control of translational fidelity.

Functionally, one of the primary rRNA binding proteins, it binds directly to 16S rRNA where it nucleates assembly of the body of the 30S subunit. Its function is as follows. With S5 and S12 plays an important role in translational accuracy. The polypeptide is Small ribosomal subunit protein uS4 (Borreliella afzelii (strain PKo) (Borrelia afzelii)).